The sequence spans 125 residues: Glutaredoxin-C1 (125 aa).

In terms of domain architecture, Glutaredoxin spans 19–119 (VNKAKEIVSA…PLLTEAGAIA (101 aa)). An intrachain disulfide couples Cys-39 to Cys-42.

It belongs to the glutaredoxin family. CPYC subfamily.

Its subcellular location is the cytoplasm. In terms of biological role, has a glutathione-disulfide oxidoreductase activity in the presence of NADPH and glutathione reductase. Reduces low molecular weight disulfides and proteins. This Arabidopsis thaliana (Mouse-ear cress) protein is Glutaredoxin-C1 (GRXC1).